The primary structure comprises 223 residues: Uracil-DNA glycosylase (223 aa).

The Proton acceptor role is filled by aspartate 61.

It belongs to the uracil-DNA glycosylase (UDG) superfamily. UNG family.

It is found in the cytoplasm. The catalysed reaction is Hydrolyzes single-stranded DNA or mismatched double-stranded DNA and polynucleotides, releasing free uracil.. Functionally, excises uracil residues from the DNA which can arise as a result of misincorporation of dUMP residues by DNA polymerase or due to deamination of cytosine. The chain is Uracil-DNA glycosylase from Tolumonas auensis (strain DSM 9187 / NBRC 110442 / TA 4).